Here is a 380-residue protein sequence, read N- to C-terminus: Cytochrome b (380 aa).

The next 4 helical transmembrane spans lie at phenylalanine 33–methionine 53, tryptophan 77–isoleucine 98, tryptophan 113–leucine 133, and phenylalanine 178–leucine 198. Residues histidine 83 and histidine 97 each contribute to the heme b site. Heme b is bound by residues histidine 182 and histidine 196. An a ubiquinone-binding site is contributed by histidine 201. Helical transmembrane passes span tyrosine 226–serine 246, leucine 288–histidine 308, isoleucine 320–glycine 340, and phenylalanine 347–proline 367.

Belongs to the cytochrome b family. In terms of assembly, the cytochrome bc1 complex contains 3 respiratory subunits (MT-CYB, CYC1 and UQCRFS1), 2 core proteins (UQCRC1 and UQCRC2) and probably 6 low-molecular weight proteins. It depends on heme b as a cofactor.

The protein localises to the mitochondrion inner membrane. Functionally, component of the ubiquinol-cytochrome c reductase complex (complex III or cytochrome b-c1 complex) that is part of the mitochondrial respiratory chain. The b-c1 complex mediates electron transfer from ubiquinol to cytochrome c. Contributes to the generation of a proton gradient across the mitochondrial membrane that is then used for ATP synthesis. This Percopsis transmontana (Sand roller) protein is Cytochrome b (mt-cyb).